Reading from the N-terminus, the 833-residue chain is Leucine--tRNA ligase (833 aa).

A 'HIGH' region motif is present at residues P41–H52. The short motif at K610 to S614 is the 'KMSKS' region element. ATP is bound at residue K613.

It belongs to the class-I aminoacyl-tRNA synthetase family.

It is found in the cytoplasm. The catalysed reaction is tRNA(Leu) + L-leucine + ATP = L-leucyl-tRNA(Leu) + AMP + diphosphate. In Streptococcus pyogenes serotype M12 (strain MGAS2096), this protein is Leucine--tRNA ligase.